We begin with the raw amino-acid sequence, 543 residues long: Ipecoside beta-D-glucosidase IpeGLU1 (543 aa).

Residues Q36, H140, 185 to 186, Y350, E422, W471, and F487 contribute to the a beta-D-glucoside site; that span reads NE. The active-site Proton donor is the E186. E422 serves as the catalytic Nucleophile.

This sequence belongs to the glycosyl hydrolase 1 family. Expressed in roots.

The protein localises to the cytoplasm. Its subcellular location is the cytosol. The catalysed reaction is deacetylipecoside + H2O = deacetylipecoside aglycone + D-glucose. The enzyme catalyses deacetylisoipecoside + H2O = deacetylisoipecoside aglycone + D-glucose. It catalyses the reaction 6-O-methyldeacetylipecoside + H2O = 6-O-methyldeacetylipecoside aglycone + D-glucose. It carries out the reaction 6-O-methyldeacetylisoipecoside + H2O = 6-O-methyldeacetylisoipecoside aglycone + D-glucose. The catalysed reaction is ipecoside + H2O = ipecoside aglycone + D-glucose. The enzyme catalyses 3alpha(S)-strictosidine + H2O = strictosidine aglycone + D-glucose. It functions in the pathway alkaloid biosynthesis. Inhibited by Cu(2+), Fe(2+) and Zn(2+). Beta-glucosidase involved in the biosynthesis of ipecac and benzylisoquinoline monoterpenoid-isoquinoline alkaloids natural products, starting by the condensation of dopamine and secologanin, and including emetine and cephaeline, drugs used both as anti-protozoal (e.g. treatment of ameobiasis) and as emetic agents. In response to pathogen and herbivore attack, triggers the release of toxic ipecoside aglycon to trigger defense responses. Catalyzes deglucosylation both on (1S)-diastereomer and (1R)-diastereomer substrates, including ipecoside, the main alkaloidal glucoside. Also active on N-deacetylisoipecoside, 6-O-methyl-N-deacetylisoipecoside, 6-O-methyl-N-deacetylipecoside and N-deacetylipecoside. The sequence is that of Ipecoside beta-D-glucosidase IpeGLU1 from Carapichea ipecacuanha (Ipecac).